The sequence spans 143 residues: Nuclear transcription factor Y subunit B-4 (143 aa).

The disordered stretch occupies residues 1 to 23 (MSEGFDGTENGGGGGGGGVGKEQ). The span at 9 to 20 (ENGGGGGGGGVG) shows a compositional bias: gly residues. The DNA-binding element occupies 27–33 (LPIANIG). Positions 54-65 (VQECVSEFISFI) are subunit association domain (SAD). Basic and acidic residues predominate over residues 117 to 130 (KGSRASELPVKKDV). The interval 117-143 (KGSRASELPVKKDVVLNGDPGSSFEGM) is disordered.

Belongs to the NFYB/HAP3 subunit family. As to quaternary structure, heterotrimeric transcription factor composed of three components, NF-YA, NF-YB and NF-YC. NF-YB and NF-YC must interact and dimerize for NF-YA association and DNA binding. In terms of tissue distribution, ubiquitous.

It is found in the nucleus. In terms of biological role, component of the NF-Y/HAP transcription factor complex. The NF-Y complex stimulates the transcription of various genes by recognizing and binding to a CCAAT motif in promoters. May regulate the expression of photosynthetic genes, and may be involved in chloroplast and amyloplast development. The chain is Nuclear transcription factor Y subunit B-4 (NFYB4) from Oryza sativa subsp. japonica (Rice).